The sequence spans 44 residues: Large ribosomal subunit protein bL34 (44 aa).

A disordered region spans residues 1–26 (MQRTLGGTNRKRKRTSGFRARMRTPD). The segment covering 9 to 22 (NRKRKRTSGFRARM) has biased composition (basic residues).

The protein belongs to the bacterial ribosomal protein bL34 family.

The protein is Large ribosomal subunit protein bL34 of Trichormus variabilis (strain ATCC 29413 / PCC 7937) (Anabaena variabilis).